A 177-amino-acid chain; its full sequence is tRNA (cytidine(56)-2'-O)-methyltransferase (177 aa).

S-adenosyl-L-methionine-binding positions include leucine 84 and 109–113 (GAEKV).

Belongs to the aTrm56 family. Homodimer.

The protein localises to the cytoplasm. It carries out the reaction cytidine(56) in tRNA + S-adenosyl-L-methionine = 2'-O-methylcytidine(56) in tRNA + S-adenosyl-L-homocysteine + H(+). Functionally, specifically catalyzes the AdoMet-dependent 2'-O-ribose methylation of cytidine at position 56 in tRNAs. The sequence is that of tRNA (cytidine(56)-2'-O)-methyltransferase from Methanosarcina acetivorans (strain ATCC 35395 / DSM 2834 / JCM 12185 / C2A).